The following is a 307-amino-acid chain: Transaldolase (307 aa).

Lysine 125 functions as the Schiff-base intermediate with substrate in the catalytic mechanism.

Belongs to the transaldolase family. Type 1 subfamily. In terms of assembly, homodimer.

It localises to the cytoplasm. It catalyses the reaction D-sedoheptulose 7-phosphate + D-glyceraldehyde 3-phosphate = D-erythrose 4-phosphate + beta-D-fructose 6-phosphate. Its pathway is carbohydrate degradation; pentose phosphate pathway; D-glyceraldehyde 3-phosphate and beta-D-fructose 6-phosphate from D-ribose 5-phosphate and D-xylulose 5-phosphate (non-oxidative stage): step 2/3. In terms of biological role, transaldolase is important for the balance of metabolites in the pentose-phosphate pathway. The protein is Transaldolase of Pseudomonas aeruginosa (strain LESB58).